A 341-amino-acid chain; its full sequence is Aspartate carbamoyltransferase catalytic subunit (341 aa).

The carbamoyl phosphate site is built by arginine 89 and threonine 90. Lysine 117 is an L-aspartate binding site. Positions 139, 169, and 172 each coordinate carbamoyl phosphate. L-aspartate contacts are provided by arginine 202 and arginine 257. Positions 298 and 299 each coordinate carbamoyl phosphate.

Belongs to the aspartate/ornithine carbamoyltransferase superfamily. ATCase family. In terms of assembly, heterododecamer (2C3:3R2) of six catalytic PyrB chains organized as two trimers (C3), and six regulatory PyrI chains organized as three dimers (R2).

It catalyses the reaction carbamoyl phosphate + L-aspartate = N-carbamoyl-L-aspartate + phosphate + H(+). It participates in pyrimidine metabolism; UMP biosynthesis via de novo pathway; (S)-dihydroorotate from bicarbonate: step 2/3. Its function is as follows. Catalyzes the condensation of carbamoyl phosphate and aspartate to form carbamoyl aspartate and inorganic phosphate, the committed step in the de novo pyrimidine nucleotide biosynthesis pathway. In Paraburkholderia phytofirmans (strain DSM 17436 / LMG 22146 / PsJN) (Burkholderia phytofirmans), this protein is Aspartate carbamoyltransferase catalytic subunit.